Consider the following 46-residue polypeptide: Protein YpdJ (46 aa).

May be involved in H(2) production during fermentative growth. The sequence is that of Protein YpdJ (ypdJ) from Escherichia coli (strain K12).